A 215-amino-acid polypeptide reads, in one-letter code: Methylthioribulose-1-phosphate dehydratase (215 aa).

Zn(2+)-binding residues include His-103 and His-105.

It belongs to the aldolase class II family. MtnB subfamily. It depends on Zn(2+) as a cofactor.

It catalyses the reaction 5-(methylsulfanyl)-D-ribulose 1-phosphate = 5-methylsulfanyl-2,3-dioxopentyl phosphate + H2O. Its pathway is amino-acid biosynthesis; L-methionine biosynthesis via salvage pathway; L-methionine from S-methyl-5-thio-alpha-D-ribose 1-phosphate: step 2/6. Catalyzes the dehydration of methylthioribulose-1-phosphate (MTRu-1-P) into 2,3-diketo-5-methylthiopentyl-1-phosphate (DK-MTP-1-P). This Persephonella marina (strain DSM 14350 / EX-H1) protein is Methylthioribulose-1-phosphate dehydratase.